We begin with the raw amino-acid sequence, 425 residues long: Formyl-CoA:oxalate CoA-transferase (425 aa).

Residues 17 to 18, arginine 38, 72 to 75, 96 to 98, arginine 104, and 136 to 139 each bind CoA; these read QS, LDTK, NFG, and KVYE. Residue aspartate 168 is the Nucleophile of the active site. 247 to 249 is a substrate binding site; it reads GGQ.

The protein belongs to the CoA-transferase III family. Frc subfamily. Homodimer.

The catalysed reaction is formyl-CoA + oxalate = oxalyl-CoA + formate. Its pathway is metabolic intermediate degradation; oxalate degradation; CO(2) and formate from oxalate: step 1/2. Functionally, involved in the catabolism of oxalate and in the adapatation to low pH via the induction of the oxalate-dependent acid tolerance response (ATR). Catalyzes the transfer of the CoA moiety from formyl-CoA to oxalate. The sequence is that of Formyl-CoA:oxalate CoA-transferase from Rhodopseudomonas palustris (strain ATCC BAA-98 / CGA009).